The chain runs to 608 residues: N(6)-adenosine-methyltransferase MT-A70-like protein (608 aa).

A compositionally biased stretch (basic and acidic residues) spans 250 to 265 (KKKQERRDEKELRPDV). The segment at 250-272 (KKKQERRDEKELRPDVDAGENVT) is disordered. S-adenosyl-L-methionine contacts are provided by residues 395–396 (DL) and Asp413. Residues 414–428 (PPWDIHMELPYGTMS) are gate loop 1. The interval 480-497 (QLQRIIRTGRTGHWLNHG) is interphase loop. Residues 483–496 (RIIRTGRTGHWLNH) are positively charged region required for RNA-binding. Residues 525-533 (VRATSHKPD) are gate loop 2. Residues Lys531, 554 to 557 (RPHN), and 567 to 568 (NQ) each bind S-adenosyl-L-methionine.

Belongs to the MT-A70-like family. In terms of assembly, component of the WMM complex, a N6-methyltransferase complex composed of a catalytic subcomplex, named MAC, and of an associated subcomplex, named MACOM. The MAC subcomplex is composed of Ime4/Mettl3 and Mettl14. The MACOM subcomplex is composed of fl(2)d, Flacc/Xio, Hakai, vir, and, in some cases of nito. Expressed in testes. In the ovaries, detected in germaria, prefollicle, follicle and polar cells (at protein levels). Detected in the ooplasm and in the cells of the 16-cell cyst of early stages (at protein levels).

It is found in the nucleus. It carries out the reaction an adenosine in mRNA + S-adenosyl-L-methionine = an N(6)-methyladenosine in mRNA + S-adenosyl-L-homocysteine + H(+). Its function is as follows. Catalytic component of the WMM complex, a complex that mediates N6-methyladenosine (m6A) methylation of mRNAs, a modification that plays a role in the efficiency of mRNA splicing and is required for sex determination. In the heterodimer formed with Mettl14, constitutes the catalytic core. Required for sex determination and dosage compensation via Sxl alternative splicing: m6A methylation acts as a key regulator of Sxl pre-mRNA and promotes female-specific alternative splicing of Sxl, which determines female physiognomy. M6A methylation is also required for neuronal functions. During oogenesis, required for egg chamber development probably as part of the N/Notch signaling. This chain is N(6)-adenosine-methyltransferase MT-A70-like protein, found in Drosophila melanogaster (Fruit fly).